A 60-amino-acid polypeptide reads, in one-letter code: UPF0434 protein Aave_2563 (60 aa).

The protein belongs to the UPF0434 family.

This is UPF0434 protein Aave_2563 from Paracidovorax citrulli (strain AAC00-1) (Acidovorax citrulli).